The chain runs to 244 residues: Small ribosomal subunit protein uS2m (244 aa).

The protein belongs to the universal ribosomal protein uS2 family.

Its subcellular location is the mitochondrion. This Dictyostelium discoideum (Social amoeba) protein is Small ribosomal subunit protein uS2m (mrps2).